Reading from the N-terminus, the 396-residue chain is Cell adhesion molecule 3 (396 aa).

An N-terminal signal peptide occupies residues 1-22; sequence MGAPSALPLLLLLACSWAPGGA. Positions 23–124 constitute an Ig-like V-type domain; the sequence is NLSQDDSQPW…VRTAKSLVTV (102 aa). The Extracellular segment spans residues 23–328; sequence NLSQDDSQPW…PVPSSSSTYH (306 aa). 3 disulfide bridges follow: C48–C108, C150–C207, and C252–C297. Ig-like C2-type domains follow at residues 128 to 226 and 231 to 313; these read PQKP…QRIE and PTAM…FTLN. An N-linked (GlcNAc...) asparagine glycan is attached at N288. A helical membrane pass occupies residues 329-349; the sequence is AIIGGIVAFIVFLLLILLIFL. Topologically, residues 350 to 396 are cytoplasmic; the sequence is GHYLIRHKGTYLTHEAKGSDDAPDADTAIINAEGGQSGGDDKKEYFI. The disordered stretch occupies residues 365 to 396; that stretch reads AKGSDDAPDADTAIINAEGGQSGGDDKKEYFI. S386 bears the Phosphoserine mark.

The protein belongs to the nectin family. Homodimer. Can form trans-heterodimers with NECTIN3. Interacts with EPB41L1, DLG3, PALS2 and CASK.

It localises to the cell membrane. It is found in the cell junction. Functionally, involved in cell-cell adhesion. Has both calcium-independent homophilic cell-cell adhesion activity and calcium-independent heterophilic cell-cell adhesion activity with IGSF4, NECTIN1 and NECTIN3. Interaction with EPB41L1 may regulate structure or function of cell-cell junctions. The sequence is that of Cell adhesion molecule 3 (Cadm3) from Rattus norvegicus (Rat).